An 80-amino-acid polypeptide reads, in one-letter code: U19-lycotoxin-Ls1a (80 aa).

An N-terminal signal peptide occupies residues 1-22 (MSPKVQALIFIVGLITLLAAHA). A propeptide spanning residues 23–34 (QEELSDNIESER) is cleaved from the precursor. 4 disulfides stabilise this stretch: Cys-36–Cys-50, Cys-43–Cys-55, Cys-49–Cys-66, and Cys-57–Cys-64.

This sequence belongs to the neurotoxin 02 (plectoxin) family. 05 (U19-lycotoxin) subfamily. Expressed by the venom gland.

Its subcellular location is the secreted. The sequence is that of U19-lycotoxin-Ls1a from Lycosa singoriensis (Wolf spider).